The following is a 669-amino-acid chain: DNA mismatch repair protein MutL (669 aa).

Residues 356 to 371 show a composition bias toward basic and acidic residues; that stretch reads FEQRQNTENKQEKTFS. Residues 356–379 are disordered; the sequence is FEQRQNTENKQEKTFSSEESNSKP.

The protein belongs to the DNA mismatch repair MutL/HexB family.

This protein is involved in the repair of mismatches in DNA. It is required for dam-dependent methyl-directed DNA mismatch repair. May act as a 'molecular matchmaker', a protein that promotes the formation of a stable complex between two or more DNA-binding proteins in an ATP-dependent manner without itself being part of a final effector complex. This Staphylococcus aureus (strain MRSA252) protein is DNA mismatch repair protein MutL.